Here is a 549-residue protein sequence, read N- to C-terminus: Glucose-6-phosphate isomerase (549 aa).

E355 serves as the catalytic Proton donor. Active-site residues include H386 and K514.

The protein belongs to the GPI family.

It is found in the cytoplasm. The catalysed reaction is alpha-D-glucose 6-phosphate = beta-D-fructose 6-phosphate. Its pathway is carbohydrate biosynthesis; gluconeogenesis. The protein operates within carbohydrate degradation; glycolysis; D-glyceraldehyde 3-phosphate and glycerone phosphate from D-glucose: step 2/4. Catalyzes the reversible isomerization of glucose-6-phosphate to fructose-6-phosphate. The protein is Glucose-6-phosphate isomerase of Sodalis glossinidius (strain morsitans).